A 77-amino-acid polypeptide reads, in one-letter code: Putative defensin-like protein 158 (77 aa).

Residues 1–24 (MANISWSHFLILMLVFSVVKKGKG) form the signal peptide. 4 disulfides stabilise this stretch: Cys31–Cys77, Cys41–Cys60, Cys46–Cys71, and Cys50–Cys73.

Belongs to the DEFL family.

Its subcellular location is the secreted. The polypeptide is Putative defensin-like protein 158 (LCR23) (Arabidopsis thaliana (Mouse-ear cress)).